We begin with the raw amino-acid sequence, 188 residues long: Methionine aminopeptidase (188 aa).

H60 provides a ligand contact to substrate. 3 residues coordinate a divalent metal cation: D80, D91, and H164. Residue H172 coordinates substrate.

Belongs to the peptidase M24A family. Methionine aminopeptidase archaeal type 2 subfamily. As to quaternary structure, monomer. Requires Co(2+) as cofactor. Zn(2+) serves as cofactor. The cofactor is Mn(2+). It depends on Fe(2+) as a cofactor.

It catalyses the reaction Release of N-terminal amino acids, preferentially methionine, from peptides and arylamides.. Functionally, removes the N-terminal methionine from nascent proteins. The N-terminal methionine is often cleaved when the second residue in the primary sequence is small and uncharged (Met-Ala-, Cys, Gly, Pro, Ser, Thr, or Val). This chain is Methionine aminopeptidase (map), found in Methanothermus fervidus.